Reading from the N-terminus, the 393-residue chain is 4-hydroxyphenylpyruvate dioxygenase (393 aa).

Thr-2 is modified (N-acetylthreonine). VOC domains are found at residues 18–149 (HFHS…LVEK) and 180–338 (IIDH…IFTK). Lys-132 bears the N6-succinyllysine mark. Fe cation is bound at residue His-183. Phosphoserine occurs at positions 211, 226, and 250. The Fe cation site is built by His-266 and Glu-349.

Belongs to the 4HPPD family. In terms of assembly, homodimer. Requires Fe cation as cofactor.

Its subcellular location is the cytoplasm. It is found in the endoplasmic reticulum membrane. The protein resides in the golgi apparatus membrane. It carries out the reaction 3-(4-hydroxyphenyl)pyruvate + O2 = homogentisate + CO2. It functions in the pathway amino-acid degradation; L-phenylalanine degradation; acetoacetate and fumarate from L-phenylalanine: step 3/6. Its function is as follows. Catalyzes the conversion of 4-hydroxyphenylpyruvic acid to homogentisic acid, one of the steps in tyrosine catabolism. The sequence is that of 4-hydroxyphenylpyruvate dioxygenase (Hpd) from Rattus norvegicus (Rat).